A 427-amino-acid chain; its full sequence is Serine--tRNA ligase (427 aa).

An L-serine-binding site is contributed by 235–237 (TSE). 266–268 (RSE) contributes to the ATP binding site. Position 289 (Glu289) interacts with L-serine. 353–356 (EISS) is a binding site for ATP. L-serine is bound at residue Ser388.

The protein belongs to the class-II aminoacyl-tRNA synthetase family. Type-1 seryl-tRNA synthetase subfamily. In terms of assembly, homodimer. The tRNA molecule binds across the dimer.

Its subcellular location is the cytoplasm. It catalyses the reaction tRNA(Ser) + L-serine + ATP = L-seryl-tRNA(Ser) + AMP + diphosphate + H(+). It carries out the reaction tRNA(Sec) + L-serine + ATP = L-seryl-tRNA(Sec) + AMP + diphosphate + H(+). The protein operates within aminoacyl-tRNA biosynthesis; selenocysteinyl-tRNA(Sec) biosynthesis; L-seryl-tRNA(Sec) from L-serine and tRNA(Sec): step 1/1. Functionally, catalyzes the attachment of serine to tRNA(Ser). Is also able to aminoacylate tRNA(Sec) with serine, to form the misacylated tRNA L-seryl-tRNA(Sec), which will be further converted into selenocysteinyl-tRNA(Sec). The chain is Serine--tRNA ligase from Chromobacterium violaceum (strain ATCC 12472 / DSM 30191 / JCM 1249 / CCUG 213 / NBRC 12614 / NCIMB 9131 / NCTC 9757 / MK).